Here is a 300-residue protein sequence, read N- to C-terminus: 4-hydroxy-tetrahydrodipicolinate synthase (300 aa).

Pyruvate is bound at residue T45. Catalysis depends on Y140, which acts as the Proton donor/acceptor. K169 (schiff-base intermediate with substrate) is an active-site residue. I210 is a binding site for pyruvate.

This sequence belongs to the DapA family. In terms of assembly, homotetramer; dimer of dimers.

Its subcellular location is the cytoplasm. The enzyme catalyses L-aspartate 4-semialdehyde + pyruvate = (2S,4S)-4-hydroxy-2,3,4,5-tetrahydrodipicolinate + H2O + H(+). Its pathway is amino-acid biosynthesis; L-lysine biosynthesis via DAP pathway; (S)-tetrahydrodipicolinate from L-aspartate: step 3/4. Functionally, catalyzes the condensation of (S)-aspartate-beta-semialdehyde [(S)-ASA] and pyruvate to 4-hydroxy-tetrahydrodipicolinate (HTPA). This Helicobacter pylori (strain P12) protein is 4-hydroxy-tetrahydrodipicolinate synthase.